The following is a 481-amino-acid chain: UDP-N-acetylmuramoyl-L-alanyl-D-glutamate--L-lysine ligase (481 aa).

Ser42 is a UDP-N-acetyl-alpha-D-muramoyl-L-alanyl-D-glutamate binding site. 118 to 124 (GTKGKTT) provides a ligand contact to ATP. UDP-N-acetyl-alpha-D-muramoyl-L-alanyl-D-glutamate is bound by residues 160-161 (TT), Ser187, and Arg195. Lys229 is modified (N6-carboxylysine). The short motif at 404-407 (DDPN) is the L-lysine recognition motif element.

The protein belongs to the MurCDEF family. MurE subfamily. Carboxylation is probably crucial for Mg(2+) binding and, consequently, for the gamma-phosphate positioning of ATP.

The protein resides in the cytoplasm. The catalysed reaction is UDP-N-acetyl-alpha-D-muramoyl-L-alanyl-D-glutamate + L-lysine + ATP = UDP-N-acetyl-alpha-D-muramoyl-L-alanyl-gamma-D-glutamyl-L-lysine + ADP + phosphate + H(+). The protein operates within cell wall biogenesis; peptidoglycan biosynthesis. In terms of biological role, catalyzes the addition of L-lysine to the nucleotide precursor UDP-N-acetylmuramoyl-L-alanyl-D-glutamate (UMAG) in the biosynthesis of bacterial cell-wall peptidoglycan. This chain is UDP-N-acetylmuramoyl-L-alanyl-D-glutamate--L-lysine ligase, found in Streptococcus suis (strain 98HAH33).